Here is a 323-residue protein sequence, read N- to C-terminus: Casein kinase I (323 aa).

The Protein kinase domain maps to Tyr9–Ile278. ATP-binding positions include Leu15–Ile23 and Lys38. Asp128 (proton acceptor) is an active-site residue.

The protein belongs to the protein kinase superfamily. CK1 Ser/Thr protein kinase family. Casein kinase I subfamily. Mg(2+) serves as cofactor.

The protein localises to the cytoplasm. It localises to the cytoplasmic vesicle. It is found in the secretory vesicle. Its subcellular location is the microneme. The protein resides in the secreted. The protein localises to the host cell surface. The enzyme catalyses L-seryl-[protein] + ATP = O-phospho-L-seryl-[protein] + ADP + H(+). It carries out the reaction L-threonyl-[protein] + ATP = O-phospho-L-threonyl-[protein] + ADP + H(+). Serine/threonine-protein kinase likely to be involved in many cellular processes. The polypeptide is Casein kinase I (CK1) (Plasmodium yoelii yoelii).